We begin with the raw amino-acid sequence, 248 residues long: 3-oxoacyl-[acyl-carrier-protein] reductase FabG (248 aa).

NADP(+) is bound by residues G14 to R17, D64 to V65, and N91. S143 serves as a coordination point for substrate. The Proton acceptor role is filled by Y156. Residues Y156–K160 and I189 contribute to the NADP(+) site.

This sequence belongs to the short-chain dehydrogenases/reductases (SDR) family. In terms of assembly, homotetramer.

The enzyme catalyses a (3R)-hydroxyacyl-[ACP] + NADP(+) = a 3-oxoacyl-[ACP] + NADPH + H(+). It participates in lipid metabolism; fatty acid biosynthesis. Catalyzes the NADPH-dependent reduction of beta-ketoacyl-ACP substrates to beta-hydroxyacyl-ACP products, the first reductive step in the elongation cycle of fatty acid biosynthesis. The polypeptide is 3-oxoacyl-[acyl-carrier-protein] reductase FabG (fabG) (Chlamydia pneumoniae (Chlamydophila pneumoniae)).